The following is a 579-amino-acid chain: Pre-mRNA-processing factor 17 (579 aa).

Low complexity predominate over residues 1–19 (MSAAIAALAASYGSGSGSE). Disordered regions lie at residues 1 to 47 (MSAA…PSSK) and 204 to 237 (DVAK…PGEE). Ser-46 is subject to Phosphoserine. WD repeat units follow at residues 286–326 (GHTK…RCLR), 330–369 (GHSK…CISR), 371–413 (TNRK…IVQE), 416–455 (RHLG…DFKY), 459–498 (PSMH…RLNK), 504–545 (GHMV…LYSR), and 548–578 (AHDK…IKLW).

Component of the pre-catalytic and catalytic spliceosome complexes. Component of the postcatalytic spliceosome P complex. Interacts with PPIL1; this interaction leads to CDC40 isomerization. Post-translationally, undergoes isomerization of the peptide bond between Gly-94 and Pro-95. The reaction is catalyzed by PPIL1.

Its subcellular location is the nucleus. The protein resides in the nucleus speckle. Required for pre-mRNA splicing as component of the activated spliceosome. Plays an important role in embryonic brain development; this function does not require proline isomerization. The polypeptide is Pre-mRNA-processing factor 17 (CDC40) (Homo sapiens (Human)).